A 587-amino-acid polypeptide reads, in one-letter code: MEIVYVYTRKRSEFGRQCNFSDRPAELHVDILPDPSQALNFIERNPCDVAIQCSHDMSEHEVNTERYDMEAHGINHVEGGWPKDINPQEMEQTIRFRKKVEKDDHYVTTISQLGSVMEHCIKQNNAINIYEEYFEETEELEGIDETPSANTVNVFRDPNEIKRTATHLSWHPDGNRKLAVAYSCLEFQRAPKDMNFESYIWDIEIPNKPELTLRPASPLVCLEYNPKDSHVLIGGCYNGQIAYWDTRKGGNPVESTVIEYSHRDPVYKVIWLQSKTGTECFSASTDGQILWWDIRKLSEPTEKLILDISKKENIDNALGAVSMEFEPTLPTKFMVGTEQGMIVSCNRKAKTPPEKIVCTYGGHHGPIYSIQRNPFFPKNFLTVGDWTARIWSEDCRESSIMWTKYHTSYLTDACWSPTRPTVFLTTKIDGTLDVWDYMYKQNNPSLSLKVSDEPLYNICMQDNGRFVACGSKMGVTTLMELSKGLYTLQRNERNLASAMFERETKREKILEARHREMRLKERSKAEPGEEVKDEKPAEDMKEIIANAEKDFFENIEAELKRKEQQEIKQSEDEHQEKEVSEEKIVHE.

WD repeat units follow at residues 214-254 (RPAS…NPVE), 261-302 (SHRD…EPTE), 362-401 (GHHG…SSIM), and 405-445 (YHTS…NNPS). Disordered stretches follow at residues 519–542 (LKER…DMKE) and 562–587 (KEQQ…IVHE).

It belongs to the dynein intermediate chain family. Consists of at least two heavy chains and a number of intermediate and light chains. Interacts with DNAAF2. Interacts with DNAAF6/PIH1D3. Interacts with HEATR2; probably involved in outer arm dynein assembly. Interacts with C16ORF71/DAAP1.

The protein localises to the cytoplasm. It is found in the cytoskeleton. It localises to the cilium axoneme. The protein resides in the dynein axonemal particle. Part of the dynein complex of multiciliated cell cilia. This Xenopus laevis (African clawed frog) protein is Dynein axonemal intermediate chain 2 (dnai2).